The sequence spans 1036 residues: Nitrogen catabolic enzyme regulatory protein (1036 aa).

Positions 1-17 (MAASTTTPTATTRPFFT) are enriched in low complexity. Disordered stretches follow at residues 1–126 (MAAS…HTQS), 207–240 (TDRTHRFSESAPQKSTSGIARLRKSSEQTQSQGS), 256–298 (TPAG…QSQH), 318–351 (GYLPRHLRKTSIDETSKRNPNRKRPADFSPHVSA), 590–743 (SSQG…PTTC), 792–976 (RGSG…PTTQ), and 1000–1028 (GMPNGQAGQMMGASSSSGPGSGPSRTGAE). Positions 23-34 (TEHDFRFPRRPG) are enriched in basic and acidic residues. Residues 45-56 (AAMSSSSANNNH) are compositionally biased toward low complexity. Repeat copies occupy residues 49–55 (SSSANNN), 87–92 (SSSNNN), and 105–110 (SSSNNN). The tract at residues 49–110 (SSSANNNHNQ…INHQSSSNNN (62 aa)) is 3 X approximate repeats. Residues 100 to 114 (NINHQSSSNNNISKN) are compositionally biased toward low complexity. The segment covering 652–661 (PRSQSQSFRQ) has biased composition (polar residues). Over residues 703-714 (SSGLSSVPASRP) the composition is skewed to low complexity. Over residues 723 to 736 (QGSTTNLQGAAGNS) the composition is skewed to polar residues. The GATA-type zinc-finger motif lies at 743–767 (CTNCFTQTTPLWRRNPDGQPLCNAC). Residues 802–827 (GTSTRSKKNASMSAAARKNSTLSITS) are compositionally biased toward polar residues. 2 stretches are compositionally biased toward low complexity: residues 828–861 (NANNQPPAQVATPPAQQQVRASSVNESESPASGP) and 868–899 (AGSTPTSYHGSTGSTSGAVGGKSVIPIASAPP). The span at 927–961 (SAGSDQPVSAGAVSSSGMDVDSPANSTGSNETMPT) shows a compositional bias: polar residues. A compositionally biased stretch (low complexity) spans 1000-1023 (GMPNGQAGQMMGASSSSGPGSGPS).

In terms of assembly, interacts with nmr.

The protein resides in the nucleus. Its function is as follows. Major nitrogen regulatory protein. During conditions of nitrogen limitation it turns on the expression of genes for enzymes which are required for the use of a variety of secondary nitrogen sources, including nitrates, purines, amino acids, and proteins. The protein is Nitrogen catabolic enzyme regulatory protein (nit-2) of Neurospora crassa (strain ATCC 24698 / 74-OR23-1A / CBS 708.71 / DSM 1257 / FGSC 987).